A 252-amino-acid chain; its full sequence is 2-succinyl-6-hydroxy-2,4-cyclohexadiene-1-carboxylate synthase (252 aa).

This sequence belongs to the AB hydrolase superfamily. MenH family. In terms of assembly, monomer.

The catalysed reaction is 5-enolpyruvoyl-6-hydroxy-2-succinyl-cyclohex-3-ene-1-carboxylate = (1R,6R)-6-hydroxy-2-succinyl-cyclohexa-2,4-diene-1-carboxylate + pyruvate. It functions in the pathway quinol/quinone metabolism; 1,4-dihydroxy-2-naphthoate biosynthesis; 1,4-dihydroxy-2-naphthoate from chorismate: step 3/7. The protein operates within quinol/quinone metabolism; menaquinone biosynthesis. Functionally, catalyzes a proton abstraction reaction that results in 2,5-elimination of pyruvate from 2-succinyl-5-enolpyruvyl-6-hydroxy-3-cyclohexene-1-carboxylate (SEPHCHC) and the formation of 2-succinyl-6-hydroxy-2,4-cyclohexadiene-1-carboxylate (SHCHC). This Klebsiella pneumoniae subsp. pneumoniae (strain ATCC 700721 / MGH 78578) protein is 2-succinyl-6-hydroxy-2,4-cyclohexadiene-1-carboxylate synthase.